Reading from the N-terminus, the 348-residue chain is Anthranilate phosphoribosyltransferase (348 aa).

5-phospho-alpha-D-ribose 1-diphosphate is bound by residues glycine 80, 83–84 (GD), threonine 88, 90–93 (NVST), 108–116 (KHGNRSVSS), and serine 120. Anthranilate is bound at residue glycine 80. Serine 92 contacts Mg(2+). Asparagine 111 contributes to the anthranilate binding site. Arginine 166 serves as a coordination point for anthranilate. 2 residues coordinate Mg(2+): aspartate 224 and glutamate 225.

The protein belongs to the anthranilate phosphoribosyltransferase family. As to quaternary structure, homodimer. Requires Mg(2+) as cofactor.

The catalysed reaction is N-(5-phospho-beta-D-ribosyl)anthranilate + diphosphate = 5-phospho-alpha-D-ribose 1-diphosphate + anthranilate. It participates in amino-acid biosynthesis; L-tryptophan biosynthesis; L-tryptophan from chorismate: step 2/5. Catalyzes the transfer of the phosphoribosyl group of 5-phosphorylribose-1-pyrophosphate (PRPP) to anthranilate to yield N-(5'-phosphoribosyl)-anthranilate (PRA). The chain is Anthranilate phosphoribosyltransferase from Sorangium cellulosum (strain So ce56) (Polyangium cellulosum (strain So ce56)).